The following is an 87-amino-acid chain: MANIKSNEKRLRQNIKRNLNNKGQKTKLKTNVKNFHKEINLDNLGNVYSQADRLARKGIISTNRARRLKSRNVAVLNKTQVTAVEGK.

Belongs to the bacterial ribosomal protein bS20 family.

In terms of biological role, binds directly to 16S ribosomal RNA. In Mycoplasma pneumoniae (strain ATCC 29342 / M129 / Subtype 1) (Mycoplasmoides pneumoniae), this protein is Small ribosomal subunit protein bS20.